The chain runs to 335 residues: Thioredoxin-related transmembrane protein 4 (335 aa).

The signal sequence occupies residues 1 to 20 (MTGGFCVPVLLAAWLAAAAA). The Thioredoxin domain occupies 26–133 (AALPAEESRV…YEDLQNYILE (108 aa)). Active-site nucleophile residues include Cys-60 and Cys-63. Cysteines 60 and 63 form a disulfide. Residues 186 to 206 (VFFVIATLVFGLFMGLILVVI) form a helical membrane-spanning segment. The disordered stretch occupies residues 222 to 316 (CEQEQSTGEA…EDGAHPADTQ (95 aa)). Over residues 238–280 (QDAEEEKDDSNEEENKDSLVDDEEEKEDIGDEDEGEEDEEEDN) the composition is skewed to acidic residues. Phosphoserine is present on residues Ser-247 and Ser-255. The span at 286–298 (AEERSDTNERAVV) shows a compositional bias: basic and acidic residues.

Its subcellular location is the nucleus inner membrane. The protein resides in the endoplasmic reticulum membrane. In Mus musculus (Mouse), this protein is Thioredoxin-related transmembrane protein 4 (Tmx4).